A 461-amino-acid chain; its full sequence is Cysteine--tRNA ligase (461 aa).

C28 contacts Zn(2+). Positions 30–40 match the 'HIGH' region motif; sequence ITVYDLCHIGH. Residues C209, H234, and E238 each contribute to the Zn(2+) site. The 'KMSKS' region motif lies at 266–270; that stretch reads KMSKS. K269 contacts ATP.

Belongs to the class-I aminoacyl-tRNA synthetase family. In terms of assembly, monomer. Zn(2+) is required as a cofactor.

It is found in the cytoplasm. It catalyses the reaction tRNA(Cys) + L-cysteine + ATP = L-cysteinyl-tRNA(Cys) + AMP + diphosphate. The polypeptide is Cysteine--tRNA ligase (Escherichia fergusonii (strain ATCC 35469 / DSM 13698 / CCUG 18766 / IAM 14443 / JCM 21226 / LMG 7866 / NBRC 102419 / NCTC 12128 / CDC 0568-73)).